Reading from the N-terminus, the 622-residue chain is 4-hydroxyphenylalkanoate adenylyltransferase (622 aa).

The protein belongs to the ATP-dependent AMP-binding enzyme family.

It catalyses the reaction 17-(4-hydroxyphenyl)heptadecanoate + holo-[(phenol)carboxyphthiodiolenone synthase] + ATP = 17-(4-hydroxyphenyl)heptadecanoyl-[(phenol)carboxyphthiodiolenone synthase] + AMP + diphosphate. The catalysed reaction is 19-(4-hydroxyphenyl)nonadecanoate + holo-[(phenol)carboxyphthiodiolenone synthase] + ATP = 19-(4-hydroxyphenyl)nonadecanoyl-[(phenol)carboxyphthiodiolenone synthase] + AMP + diphosphate. Its pathway is lipid metabolism; fatty acid biosynthesis. Its function is as follows. Catalyzes the activation of long-chain fatty acids as acyl-adenylates (acyl-AMP), which are then transferred to the multifunctional polyketide synthase PpsA for further chain extension. Involved in the biosynthesis of phenolphthiocerol, which is an important intermediate in the biosynthesis of phenolic glycolipid (PGL), also called mycosid B. The polypeptide is 4-hydroxyphenylalkanoate adenylyltransferase (fadD29) (Mycobacterium marinum (strain ATCC BAA-535 / M)).